Reading from the N-terminus, the 75-residue chain is Small ribosomal subunit protein bS18 (75 aa).

Belongs to the bacterial ribosomal protein bS18 family. As to quaternary structure, part of the 30S ribosomal subunit. Forms a tight heterodimer with protein bS6.

Binds as a heterodimer with protein bS6 to the central domain of the 16S rRNA, where it helps stabilize the platform of the 30S subunit. The protein is Small ribosomal subunit protein bS18 of Glaesserella parasuis serovar 5 (strain SH0165) (Haemophilus parasuis).